Reading from the N-terminus, the 95-residue chain is Protein TusB (95 aa).

This sequence belongs to the DsrH/TusB family. As to quaternary structure, heterohexamer, formed by a dimer of trimers. The hexameric TusBCD complex contains 2 copies each of TusB, TusC and TusD. The TusBCD complex interacts with TusE.

It localises to the cytoplasm. Its function is as follows. Part of a sulfur-relay system required for 2-thiolation of 5-methylaminomethyl-2-thiouridine (mnm(5)s(2)U) at tRNA wobble positions. This chain is Protein TusB, found in Salmonella agona (strain SL483).